The sequence spans 345 residues: Protein RecA (345 aa).

Residue 66–73 (GPESSGKT) participates in ATP binding.

Belongs to the RecA family.

The protein resides in the cytoplasm. Can catalyze the hydrolysis of ATP in the presence of single-stranded DNA, the ATP-dependent uptake of single-stranded DNA by duplex DNA, and the ATP-dependent hybridization of homologous single-stranded DNAs. It interacts with LexA causing its activation and leading to its autocatalytic cleavage. The polypeptide is Protein RecA (Frankia casuarinae (strain DSM 45818 / CECT 9043 / HFP020203 / CcI3)).